The following is a 298-amino-acid chain: 4-hydroxy-tetrahydrodipicolinate synthase (298 aa).

Threonine 48 serves as a coordination point for pyruvate. The Proton donor/acceptor role is filled by tyrosine 137. The Schiff-base intermediate with substrate role is filled by lysine 166. A pyruvate-binding site is contributed by isoleucine 207.

Belongs to the DapA family. As to quaternary structure, homotetramer; dimer of dimers.

It is found in the cytoplasm. It carries out the reaction L-aspartate 4-semialdehyde + pyruvate = (2S,4S)-4-hydroxy-2,3,4,5-tetrahydrodipicolinate + H2O + H(+). It participates in amino-acid biosynthesis; L-lysine biosynthesis via DAP pathway; (S)-tetrahydrodipicolinate from L-aspartate: step 3/4. Its function is as follows. Catalyzes the condensation of (S)-aspartate-beta-semialdehyde [(S)-ASA] and pyruvate to 4-hydroxy-tetrahydrodipicolinate (HTPA). The sequence is that of 4-hydroxy-tetrahydrodipicolinate synthase from Campylobacter jejuni subsp. jejuni serotype O:6 (strain 81116 / NCTC 11828).